We begin with the raw amino-acid sequence, 276 residues long: Ribosomal RNA small subunit methyltransferase A (276 aa).

S-adenosyl-L-methionine contacts are provided by histidine 15, leucine 17, glycine 42, glutamate 64, aspartate 89, and asparagine 108.

This sequence belongs to the class I-like SAM-binding methyltransferase superfamily. rRNA adenine N(6)-methyltransferase family. RsmA subfamily.

Its subcellular location is the cytoplasm. It catalyses the reaction adenosine(1518)/adenosine(1519) in 16S rRNA + 4 S-adenosyl-L-methionine = N(6)-dimethyladenosine(1518)/N(6)-dimethyladenosine(1519) in 16S rRNA + 4 S-adenosyl-L-homocysteine + 4 H(+). Functionally, specifically dimethylates two adjacent adenosines (A1518 and A1519) in the loop of a conserved hairpin near the 3'-end of 16S rRNA in the 30S particle. May play a critical role in biogenesis of 30S subunits. The chain is Ribosomal RNA small subunit methyltransferase A from Prochlorococcus marinus (strain MIT 9515).